The primary structure comprises 1668 residues: Kinesin-like protein KIF21B (1668 aa).

In terms of domain architecture, Kinesin motor spans 8–371; it reads CVKVAVRIRP…LKYANRARNI (364 aa). 87–94 contributes to the ATP binding site; the sequence is GQTGAGKT. A coiled-coil region spans residues 372-465; the sequence is KNKVVVNQDK…LMSQEANLLL (94 aa). The segment at 401 to 1100 is interaction with TRIM3; it reads MEYKAGKRVI…LQALIYNVQH (700 aa). 2 disordered regions span residues 553-629 and 837-866; these read KKKE…PEEK and RVGL…GARS. Acidic residues predominate over residues 579–628; that stretch reads NSEETDENEAEEEEEERDESGCEEEEGREDEDEDSGSEESLVDSDSDPEE. Position 580 is a phosphoserine (Ser580). The residue at position 583 (Thr583) is a Phosphothreonine. Positions 847–866 are enriched in low complexity; the sequence is SGAEVSASTTSSEAESGARS. The stretch at 924-1019 forms a coiled coil; sequence IIDIVMQRMT…TKEELDSTDT (96 aa). Residues Ser1150, Ser1168, and Ser1217 each carry the phosphoserine modification. The span at 1199-1219 shows a compositional bias: polar residues; that stretch reads LPTRGSTFPRQSRGATDTSPL. The interval 1199 to 1253 is disordered; that stretch reads LPTRGSTFPRQSRGATDTSPLTRRKSYDRGQPIRSTDMGFTPPSSPPTRPRNDRN. Thr1239 is modified (phosphothreonine). Phosphoserine is present on Ser1243. WD repeat units follow at residues 1308–1345, 1348–1386, 1412–1450, 1453–1495, 1504–1541, 1545–1584, and 1587–1624; these read GHTK…EIAA, GHPN…KCIR, QGEH…PIGK, GHIG…TGTI, PHYD…LIQQ, AHKD…PIGE, and GHDS…TPCL.

Belongs to the TRAFAC class myosin-kinesin ATPase superfamily. Kinesin family. As to quaternary structure, interacts with TRIM3; the interaction positively affects motility of KIF21B. Interacts with GABARAP and GABA(A) receptor subunits: GABRG2, GABRA1 and GABRA2. May interact with GABA(A) receptor subunits: GABRB2 and GABRB3. As to expression, expressed in brain (at protein level). Expressed in spleen and at lower levels in testes.

The protein resides in the cytoplasm. It localises to the cytoskeleton. Its subcellular location is the cell projection. The protein localises to the dendrite. It is found in the growth cone. The protein resides in the axon. It localises to the cytoplasmic vesicle. In terms of biological role, plus-end directed microtubule-dependent motor protein which displays processive activity. Is involved in regulation of microtubule dynamics, synapse function and neuronal morphology, including dendritic tree branching and spine formation. Plays a role in lerning and memory. Involved in delivery of gamma-aminobutyric acid (GABA(A)) receptor to cell surface. The chain is Kinesin-like protein KIF21B (Kif21b) from Mus musculus (Mouse).